The sequence spans 320 residues: MARQRKKKGRPVSGWVVFDKPKGMKSTEAVSKIKWLFHAQKAGHAGTLDPLASGLLPIALGEATKTVPYVMQGKKTYRFHIAWGQERSTDDLEGEITKTSLKRPTQEEILALLPQYTGIILQTPPQFSAIKIAGNRAYDLAREGEVIEIPPREVEIETFKLVETPTKEHSVFEITCGKGTYVRSLARDMGRDLGCYGHIADLRRIAVAPFCEEDLVTWDELKAAISPNKNTTDENENSFEKDFLTLDELLIETGAALDCLPHYPLTDTQAQRVMRGHSIPLSAQKTLLDEEEVCVLYKEQLLAIGTLDKGLFKPKRIFTI.

The active-site Nucleophile is Asp49.

This sequence belongs to the pseudouridine synthase TruB family. Type 1 subfamily.

The catalysed reaction is uridine(55) in tRNA = pseudouridine(55) in tRNA. In terms of biological role, responsible for synthesis of pseudouridine from uracil-55 in the psi GC loop of transfer RNAs. This chain is tRNA pseudouridine synthase B, found in Bartonella tribocorum (strain CIP 105476 / IBS 506).